Here is a 456-residue protein sequence, read N- to C-terminus: Bifunctional protein GlmU (456 aa).

Residues 1–229 (MLNNAMSVVI…LSEVEGVNNR (229 aa)) are pyrophosphorylase. UDP-N-acetyl-alpha-D-glucosamine-binding positions include 11–14 (LAAG), Lys-25, Gln-76, 81–82 (GT), 103–105 (YGD), Gly-140, Glu-154, Asn-169, and Asn-227. Asp-105 lines the Mg(2+) pocket. Residue Asn-227 coordinates Mg(2+). Positions 230–250 (LQLSRLERVYQSEQAEKLLLA) are linker. Residues 251-456 (GVMLRDPARF…EGWRRPVKKK (206 aa)) form an N-acetyltransferase region. Positions 333 and 351 each coordinate UDP-N-acetyl-alpha-D-glucosamine. The active-site Proton acceptor is the His-363. 2 residues coordinate UDP-N-acetyl-alpha-D-glucosamine: Tyr-366 and Asn-377. Residues Ala-380, 386–387 (NY), Ser-405, Ala-423, and Arg-440 contribute to the acetyl-CoA site.

This sequence in the N-terminal section; belongs to the N-acetylglucosamine-1-phosphate uridyltransferase family. The protein in the C-terminal section; belongs to the transferase hexapeptide repeat family. As to quaternary structure, homotrimer. Mg(2+) serves as cofactor.

The protein localises to the cytoplasm. The catalysed reaction is alpha-D-glucosamine 1-phosphate + acetyl-CoA = N-acetyl-alpha-D-glucosamine 1-phosphate + CoA + H(+). It catalyses the reaction N-acetyl-alpha-D-glucosamine 1-phosphate + UTP + H(+) = UDP-N-acetyl-alpha-D-glucosamine + diphosphate. The protein operates within nucleotide-sugar biosynthesis; UDP-N-acetyl-alpha-D-glucosamine biosynthesis; N-acetyl-alpha-D-glucosamine 1-phosphate from alpha-D-glucosamine 6-phosphate (route II): step 2/2. It functions in the pathway nucleotide-sugar biosynthesis; UDP-N-acetyl-alpha-D-glucosamine biosynthesis; UDP-N-acetyl-alpha-D-glucosamine from N-acetyl-alpha-D-glucosamine 1-phosphate: step 1/1. It participates in bacterial outer membrane biogenesis; LPS lipid A biosynthesis. Its function is as follows. Catalyzes the last two sequential reactions in the de novo biosynthetic pathway for UDP-N-acetylglucosamine (UDP-GlcNAc). The C-terminal domain catalyzes the transfer of acetyl group from acetyl coenzyme A to glucosamine-1-phosphate (GlcN-1-P) to produce N-acetylglucosamine-1-phosphate (GlcNAc-1-P), which is converted into UDP-GlcNAc by the transfer of uridine 5-monophosphate (from uridine 5-triphosphate), a reaction catalyzed by the N-terminal domain. In Shigella flexneri serotype 5b (strain 8401), this protein is Bifunctional protein GlmU.